Consider the following 381-residue polypeptide: Cytochrome b (381 aa).

The next 4 membrane-spanning stretches (helical) occupy residues 34-54, 78-99, 114-134, and 179-199; these read FGSLLATCLALQIITGIFLAM, WLIRNMHANGASLFFMCIYLHI, WNTGIILLLLVMATAFVGYVL, and FFTFHFLLPFAITGLTAVHLL. Positions 84 and 98 each coordinate heme b. Heme b-binding residues include His183 and His197. An a ubiquinone-binding site is contributed by His202. The next 4 membrane-spanning stretches (helical) occupy residues 227–247, 289–309, 321–341, and 348–368; these read YKDLLGLILMLTFLLTLTLFS, LGGVLALLFSILILFLMPTLH, LTQILFWSLVADLLVLTWIGG, and FIIIGQVASTFYFLILLLLMP.

Belongs to the cytochrome b family. The cytochrome bc1 complex contains 3 respiratory subunits (MT-CYB, CYC1 and UQCRFS1), 2 core proteins (UQCRC1 and UQCRC2) and probably 6 low-molecular weight proteins. It depends on heme b as a cofactor.

Its subcellular location is the mitochondrion inner membrane. Component of the ubiquinol-cytochrome c reductase complex (complex III or cytochrome b-c1 complex) that is part of the mitochondrial respiratory chain. The b-c1 complex mediates electron transfer from ubiquinol to cytochrome c. Contributes to the generation of a proton gradient across the mitochondrial membrane that is then used for ATP synthesis. This is Cytochrome b (MT-CYB) from Chelonia mydas (Green sea-turtle).